We begin with the raw amino-acid sequence, 619 residues long: 1-deoxy-D-xylulose-5-phosphate synthase (619 aa).

Residues His63 and 104-106 (GHS) contribute to the thiamine diphosphate site. Position 136 (Asp136) interacts with Mg(2+). Thiamine diphosphate contacts are provided by residues 137–138 (GS), Asn165, Tyr272, and Glu353. Asn165 contributes to the Mg(2+) binding site.

Belongs to the transketolase family. DXPS subfamily. Homodimer. Mg(2+) is required as a cofactor. It depends on thiamine diphosphate as a cofactor.

The catalysed reaction is D-glyceraldehyde 3-phosphate + pyruvate + H(+) = 1-deoxy-D-xylulose 5-phosphate + CO2. The protein operates within metabolic intermediate biosynthesis; 1-deoxy-D-xylulose 5-phosphate biosynthesis; 1-deoxy-D-xylulose 5-phosphate from D-glyceraldehyde 3-phosphate and pyruvate: step 1/1. Catalyzes the acyloin condensation reaction between C atoms 2 and 3 of pyruvate and glyceraldehyde 3-phosphate to yield 1-deoxy-D-xylulose-5-phosphate (DXP). The protein is 1-deoxy-D-xylulose-5-phosphate synthase of Wolinella succinogenes (strain ATCC 29543 / DSM 1740 / CCUG 13145 / JCM 31913 / LMG 7466 / NCTC 11488 / FDC 602W) (Vibrio succinogenes).